A 296-amino-acid chain; its full sequence is D-alanine--D-alanine ligase (296 aa).

In terms of domain architecture, ATP-grasp spans 103 to 293 (KEILMHHRMP…FDSFVKRIIE (191 aa)). 129 to 180 (ISFPVAVKPSSGGSSIATFKVKSIQELKHAYEEASKYGEVMIEQWVTGKEIT) is a binding site for ATP. Positions 247, 260, and 262 each coordinate Mg(2+).

This sequence belongs to the D-alanine--D-alanine ligase family. It depends on Mg(2+) as a cofactor. Requires Mn(2+) as cofactor.

Its subcellular location is the cytoplasm. It catalyses the reaction 2 D-alanine + ATP = D-alanyl-D-alanine + ADP + phosphate + H(+). Its pathway is cell wall biogenesis; peptidoglycan biosynthesis. Functionally, cell wall formation. The protein is D-alanine--D-alanine ligase of Francisella tularensis subsp. tularensis (strain FSC 198).